Here is a 431-residue protein sequence, read N- to C-terminus: Glutamate-1-semialdehyde 2,1-aminomutase (431 aa).

Lys-265 carries the post-translational modification N6-(pyridoxal phosphate)lysine.

The protein belongs to the class-III pyridoxal-phosphate-dependent aminotransferase family. HemL subfamily. As to quaternary structure, homodimer. The cofactor is pyridoxal 5'-phosphate.

Its subcellular location is the cytoplasm. It catalyses the reaction (S)-4-amino-5-oxopentanoate = 5-aminolevulinate. The protein operates within porphyrin-containing compound metabolism; protoporphyrin-IX biosynthesis; 5-aminolevulinate from L-glutamyl-tRNA(Glu): step 2/2. The polypeptide is Glutamate-1-semialdehyde 2,1-aminomutase (Pseudoalteromonas atlantica (strain T6c / ATCC BAA-1087)).